Consider the following 633-residue polypeptide: MSEAPRIQLLSPRLANQIAAGEVVERPASVAKELLENSLDAGSRRIDVEVEQGGIKLLRVRDDGRGIPADDLPLALARHATSKIRELEDLERVMSLGFRGEALASISSVARLTMTSRTADAGEAWQVETEGRDMQPRVQPAAHPVGTSVEVRDLFFNTPARRKFLRAEKTEFDHLQEVIKRLALARFDVAFHLRHNGKTIFALHEARDELARARRVGAVCGQAFLEQALPIEVERNGLHLWGWVGLPTFSRSQPDLQYFYVNGRMVRDKLVAHAVRQAYRDVLYNGRHPTFVLFFEVDPAVVDVNVHPTKHEVRFRDSRMVHDFLYGTLHRALGEVRPDDQLAPPGATSLTEPRPTGAAAGEFGPQGEMRLAESVLESPAARVGWSGGSSASGGSSGYSAYTRPEAPPSLAEAGGAYKAYFAPLPAGEAPAALPESAQDIPPLGYALAQLKGIYILAENAHGLVLVDMHAAHERITYERLKVAMASEGLRGQPLLVPESIAVSEREADCAEEHSSWFQRLGFELQRLGPESLAIRQIPALLKQAEATQLVRDVIADLLEYGTSDRIQAHLNELLGTMACHGAVRANRRLTLPEMNALLRDMEITERSGQCNHGRPTWTQLGLDELDKLFLRGR.

2 disordered regions span residues 337–364 (RPDDQLAPPGATSLTEPRPTGAAAGEFG) and 383–405 (VGWSGGSSASGGSSGYSAYTRPE). The segment covering 385-396 (WSGGSSASGGSS) has biased composition (gly residues).

It belongs to the DNA mismatch repair MutL/HexB family.

Functionally, this protein is involved in the repair of mismatches in DNA. It is required for dam-dependent methyl-directed DNA mismatch repair. May act as a 'molecular matchmaker', a protein that promotes the formation of a stable complex between two or more DNA-binding proteins in an ATP-dependent manner without itself being part of a final effector complex. This Pseudomonas aeruginosa (strain LESB58) protein is DNA mismatch repair protein MutL.